Consider the following 236-residue polypeptide: Purine nucleoside phosphorylase DeoD-type 2 (236 aa).

Residue histidine 5 coordinates a purine D-ribonucleoside. Phosphate-binding positions include glycine 21, arginine 25, arginine 44, and 88–91; that span reads RIGS. Residues 180–182 and 204–205 each bind a purine D-ribonucleoside; these read DME and SD. Residue aspartate 205 is the Proton donor of the active site.

This sequence belongs to the PNP/UDP phosphorylase family. Homohexamer; trimer of homodimers.

The catalysed reaction is a purine D-ribonucleoside + phosphate = a purine nucleobase + alpha-D-ribose 1-phosphate. It catalyses the reaction a purine 2'-deoxy-D-ribonucleoside + phosphate = a purine nucleobase + 2-deoxy-alpha-D-ribose 1-phosphate. Functionally, catalyzes the reversible phosphorolytic breakdown of the N-glycosidic bond in the beta-(deoxy)ribonucleoside molecules, with the formation of the corresponding free purine bases and pentose-1-phosphate. This is Purine nucleoside phosphorylase DeoD-type 2 from Vibrio cholerae serotype O1 (strain ATCC 39315 / El Tor Inaba N16961).